The sequence spans 359 residues: Methylthioribose-1-phosphate isomerase (359 aa).

Residues 52 to 54 (RGA), arginine 90, and glutamine 200 contribute to the substrate site. Aspartate 241 functions as the Proton donor in the catalytic mechanism. A substrate-binding site is contributed by 251 to 252 (NK).

Belongs to the eIF-2B alpha/beta/delta subunits family. MtnA subfamily.

It carries out the reaction 5-(methylsulfanyl)-alpha-D-ribose 1-phosphate = 5-(methylsulfanyl)-D-ribulose 1-phosphate. It functions in the pathway amino-acid biosynthesis; L-methionine biosynthesis via salvage pathway; L-methionine from S-methyl-5-thio-alpha-D-ribose 1-phosphate: step 1/6. In terms of biological role, catalyzes the interconversion of methylthioribose-1-phosphate (MTR-1-P) into methylthioribulose-1-phosphate (MTRu-1-P). The protein is Methylthioribose-1-phosphate isomerase of Sulfurimonas denitrificans (strain ATCC 33889 / DSM 1251) (Thiomicrospira denitrificans (strain ATCC 33889 / DSM 1251)).